A 148-amino-acid chain; its full sequence is Large ribosomal subunit protein bL9 (148 aa).

The protein belongs to the bacterial ribosomal protein bL9 family.

Its function is as follows. Binds to the 23S rRNA. This Bacillus mycoides (strain KBAB4) (Bacillus weihenstephanensis) protein is Large ribosomal subunit protein bL9.